A 616-amino-acid polypeptide reads, in one-letter code: Dihydroxy-acid dehydratase (616 aa).

Residue aspartate 81 participates in Mg(2+) binding. [2Fe-2S] cluster is bound at residue cysteine 122. Residues aspartate 123 and lysine 124 each contribute to the Mg(2+) site. Lysine 124 bears the N6-carboxylysine mark. Cysteine 195 lines the [2Fe-2S] cluster pocket. Glutamate 491 lines the Mg(2+) pocket. The Proton acceptor role is filled by serine 517.

The protein belongs to the IlvD/Edd family. Homodimer. [2Fe-2S] cluster serves as cofactor. The cofactor is Mg(2+).

It catalyses the reaction (2R)-2,3-dihydroxy-3-methylbutanoate = 3-methyl-2-oxobutanoate + H2O. It carries out the reaction (2R,3R)-2,3-dihydroxy-3-methylpentanoate = (S)-3-methyl-2-oxopentanoate + H2O. The protein operates within amino-acid biosynthesis; L-isoleucine biosynthesis; L-isoleucine from 2-oxobutanoate: step 3/4. Its pathway is amino-acid biosynthesis; L-valine biosynthesis; L-valine from pyruvate: step 3/4. Its function is as follows. Functions in the biosynthesis of branched-chain amino acids. Catalyzes the dehydration of (2R,3R)-2,3-dihydroxy-3-methylpentanoate (2,3-dihydroxy-3-methylvalerate) into 2-oxo-3-methylpentanoate (2-oxo-3-methylvalerate) and of (2R)-2,3-dihydroxy-3-methylbutanoate (2,3-dihydroxyisovalerate) into 2-oxo-3-methylbutanoate (2-oxoisovalerate), the penultimate precursor to L-isoleucine and L-valine, respectively. The protein is Dihydroxy-acid dehydratase of Methylocella silvestris (strain DSM 15510 / CIP 108128 / LMG 27833 / NCIMB 13906 / BL2).